The sequence spans 128 residues: uncharacterized protein (128 aa).

This is an uncharacterized protein from Mycobacterium tuberculosis (strain CDC 1551 / Oshkosh).